A 454-amino-acid chain; its full sequence is Glutamyl-tRNA reductase (454 aa).

Substrate-binding positions include 49 to 52 (TCNR), S109, 114 to 116 (ETQ), and Q120. The active-site Nucleophile is C50. Position 189-194 (189-194 (GAGKMG)) interacts with NADP(+).

This sequence belongs to the glutamyl-tRNA reductase family. As to quaternary structure, homodimer.

It carries out the reaction (S)-4-amino-5-oxopentanoate + tRNA(Glu) + NADP(+) = L-glutamyl-tRNA(Glu) + NADPH + H(+). The protein operates within porphyrin-containing compound metabolism; protoporphyrin-IX biosynthesis; 5-aminolevulinate from L-glutamyl-tRNA(Glu): step 1/2. In terms of biological role, catalyzes the NADPH-dependent reduction of glutamyl-tRNA(Glu) to glutamate 1-semialdehyde (GSA). In Geobacillus kaustophilus (strain HTA426), this protein is Glutamyl-tRNA reductase.